The following is a 56-amino-acid chain: Small ribosomal subunit protein bS21 (56 aa).

Belongs to the bacterial ribosomal protein bS21 family.

The sequence is that of Small ribosomal subunit protein bS21 (rpsU) from Geobacillus stearothermophilus (Bacillus stearothermophilus).